A 159-amino-acid polypeptide reads, in one-letter code: Ribosome maturation factor RimP (159 aa).

The protein belongs to the RimP family.

The protein localises to the cytoplasm. Its function is as follows. Required for maturation of 30S ribosomal subunits. The chain is Ribosome maturation factor RimP from Trichlorobacter lovleyi (strain ATCC BAA-1151 / DSM 17278 / SZ) (Geobacter lovleyi).